The primary structure comprises 780 residues: ATP-dependent 6-phosphofructokinase, liver type (780 aa).

The residue at position 2 (alanine 2) is an N-acetylalanine. The N-terminal catalytic PFK domain 1 stretch occupies residues 2–390 (ATVDLEKLRM…NWKIYKLLAH (389 aa)). Residues glycine 25, 88-89 (RC), and 118-121 (GDGS) contribute to the ATP site. Position 119 (aspartate 119) interacts with Mg(2+). Residues 164–166 (SID), arginine 201, 208–210 (MGR), glutamate 264, arginine 292, and 298–301 (HVQR) each bind substrate. Aspartate 166 serves as the catalytic Proton acceptor. Position 377 is a phosphoserine (serine 377). The interdomain linker stretch occupies residues 391–400 (QKVSKEKSNF). The tract at residues 401-780 (SLAILNVGAP…RRTLSIDKGF (380 aa)) is C-terminal regulatory PFK domain 2. Beta-D-fructose 2,6-bisphosphate is bound by residues arginine 470, 527 to 531 (TISNN), arginine 565, 572 to 574 (MGG), and glutamate 628. The O-linked (GlcNAc) serine glycan is linked to serine 529. Residue tyrosine 640 is modified to Phosphotyrosine. Residues arginine 654, 660–663 (HLQQ), and arginine 734 each bind beta-D-fructose 2,6-bisphosphate. Serine 775 carries the phosphoserine modification.

This sequence belongs to the phosphofructokinase type A (PFKA) family. ATP-dependent PFK group I subfamily. Eukaryotic two domain clade 'E' sub-subfamily. In terms of assembly, homo- and heterotetramers. Phosphofructokinase (PFK) enzyme functions as a tetramer composed of different combinations of 3 types of subunits, called PFKM (M), PFKL (L) and PFKP (P). The composition of the PFK tetramer differs according to the tissue type it is present in. The kinetic and regulatory properties of the tetrameric enzyme are dependent on the subunit composition, hence can vary across tissues. Requires Mg(2+) as cofactor. GlcNAcylation at Ser-529 by OGT decreases enzyme activity, leading to redirect glucose flux through the oxidative pentose phosphate pathway. Glycosylation is stimulated by both hypoxia and glucose deprivation.

Its subcellular location is the cytoplasm. It catalyses the reaction beta-D-fructose 6-phosphate + ATP = beta-D-fructose 1,6-bisphosphate + ADP + H(+). The protein operates within carbohydrate degradation; glycolysis; D-glyceraldehyde 3-phosphate and glycerone phosphate from D-glucose: step 3/4. With respect to regulation, allosterically activated by ADP, AMP, or fructose 2,6-bisphosphate, and allosterically inhibited by ATP or citrate. GlcNAcylation by OGT overcomes allosteric regulation. Functionally, catalyzes the phosphorylation of D-fructose 6-phosphate to fructose 1,6-bisphosphate by ATP, the first committing step of glycolysis. Negatively regulates the phagocyte oxidative burst in response to bacterial infection by controlling cellular NADPH biosynthesis and NADPH oxidase-derived reactive oxygen species. Upon macrophage activation, drives the metabolic switch toward glycolysis, thus preventing glucose turnover that produces NADPH via pentose phosphate pathway. In Mus musculus (Mouse), this protein is ATP-dependent 6-phosphofructokinase, liver type.